A 230-amino-acid chain; its full sequence is Ly6/PLAUR domain-containing protein 8 (230 aa).

The signal sequence occupies residues 1–20; that stretch reads MKSFLFAGIVVVLTVAAVDT. Residues asparagine 37, asparagine 44, asparagine 74, asparagine 77, asparagine 90, asparagine 106, asparagine 110, asparagine 132, asparagine 137, asparagine 156, asparagine 168, asparagine 181, and asparagine 197 are each glycosylated (N-linked (GlcNAc...) asparagine). One can recognise a UPAR/Ly6 domain in the interval 125–172; sequence CPACYGNNETSCNETRKCYGERCVSIIAEFTNETKTLVLKGCSNVSIS. Serine 211 carries GPI-anchor amidated serine lipidation. A propeptide spans 212–230 (removed in mature form); the sequence is QASFTPLALASILLLSLLL.

The protein belongs to the CNF-like-inhibitor family. In terms of processing, highly N-glycosylated. Not O-glycosylated. Post-translationally, GPI-anchored. The GPI-anchor is cleaved, leading to secretion into the colonic lumen.

The protein resides in the cell membrane. It is found in the secreted. Secreted protein specifically required to prevent invasion of Gram-negative bacteria in the inner mucus layer of the colon epithelium, a portion of the large intestine which is free of commensal microbiota. Prevents invasion of flagellated microbiota by binding to the flagellum of bacteria, such as P.mirabilis, thereby inhibiting bacterial motility in the intestinal lumen. Segregation of intestinal bacteria and epithelial cells in the colon is required to preserve intestinal homeostasis. The chain is Ly6/PLAUR domain-containing protein 8 (LYPD8) from Bos taurus (Bovine).